The primary structure comprises 202 residues: LexA repressor (202 aa).

A DNA-binding region (H-T-H motif) is located at residues 28–48 (RAEIAQQLGFRSPNAAEEHLK). Catalysis depends on for autocatalytic cleavage activity residues Ser119 and Lys156.

This sequence belongs to the peptidase S24 family. In terms of assembly, homodimer.

It catalyses the reaction Hydrolysis of Ala-|-Gly bond in repressor LexA.. Represses a number of genes involved in the response to DNA damage (SOS response), including recA and lexA. Binds to the 16 bp palindromic sequence 5'-CTGTATATATATACAG-3'. In the presence of single-stranded DNA, RecA interacts with LexA causing an autocatalytic cleavage which disrupts the DNA-binding part of LexA, leading to derepression of the SOS regulon and eventually DNA repair. The protein is LexA repressor of Pectobacterium carotovorum subsp. carotovorum (Erwinia carotovora subsp. carotovora).